The chain runs to 137 residues: Large ribosomal subunit protein uL16 (137 aa).

Belongs to the universal ribosomal protein uL16 family. As to quaternary structure, part of the 50S ribosomal subunit.

Binds 23S rRNA and is also seen to make contacts with the A and possibly P site tRNAs. This Solidesulfovibrio magneticus (strain ATCC 700980 / DSM 13731 / RS-1) (Desulfovibrio magneticus) protein is Large ribosomal subunit protein uL16.